A 131-amino-acid chain; its full sequence is Con-Ins Q1b (131 aa).

The signal sequence occupies residues 1–24 (MTTSSYFLLVALGLLLYLCQSSFG). Intrachain disulfides connect C29–C107, C41–C110, C53–C123, and C109–C114. Positions 59–92 (LQGGTDDARKKRGRASLLRKRRGFLSMLKARAKR) are cleaved as a propeptide — c peptide. E118 is subject to 4-carboxyglutamate; partial. Residue S130 is modified to Serine amide.

This sequence belongs to the insulin family. Heterodimer of A and B chains; disulfide-linked. Expressed by the venom gland.

It localises to the secreted. Its function is as follows. This venom insulin facilitates prey capture by rapidly inducing hypoglycemic shock. Intraperitoneal injection of this peptide into zebrafish lowers blood glucose with the same potency than human insulin. In vivo, when applied to water, this peptide reduces overall locomotor activity of zebrafish larvae, observed as a significant decrease in the percentage of time spent swimming and movement frequency. In Conus quercinus (Oak cone), this protein is Con-Ins Q1b.